A 125-amino-acid polypeptide reads, in one-letter code: Large ribosomal subunit protein uL22 (125 aa).

The protein belongs to the universal ribosomal protein uL22 family. As to quaternary structure, part of the 50S ribosomal subunit.

This protein binds specifically to 23S rRNA; its binding is stimulated by other ribosomal proteins, e.g. L4, L17, and L20. It is important during the early stages of 50S assembly. It makes multiple contacts with different domains of the 23S rRNA in the assembled 50S subunit and ribosome. In terms of biological role, the globular domain of the protein is located near the polypeptide exit tunnel on the outside of the subunit, while an extended beta-hairpin is found that lines the wall of the exit tunnel in the center of the 70S ribosome. The chain is Large ribosomal subunit protein uL22 from Thermobifida fusca (strain YX).